Reading from the N-terminus, the 348-residue chain is Phosphoribosylformylglycinamidine cyclo-ligase (348 aa).

Belongs to the AIR synthase family.

It localises to the cytoplasm. It carries out the reaction 2-formamido-N(1)-(5-O-phospho-beta-D-ribosyl)acetamidine + ATP = 5-amino-1-(5-phospho-beta-D-ribosyl)imidazole + ADP + phosphate + H(+). It functions in the pathway purine metabolism; IMP biosynthesis via de novo pathway; 5-amino-1-(5-phospho-D-ribosyl)imidazole from N(2)-formyl-N(1)-(5-phospho-D-ribosyl)glycinamide: step 2/2. The protein is Phosphoribosylformylglycinamidine cyclo-ligase of Geobacter sulfurreducens (strain ATCC 51573 / DSM 12127 / PCA).